The primary structure comprises 1227 residues: Pre-mRNA-splicing factor ATP-dependent RNA helicase PRP16 (1227 aa).

N-acetylglycine is present on glycine 2. At serine 56 the chain carries Phosphoserine. Positions arginine 60 to glutamine 89 are enriched in basic and acidic residues. A disordered region spans residues arginine 60–arginine 320. A Phosphothreonine modification is found at threonine 117. Residues phenylalanine 128–arginine 201 show a composition bias toward basic and acidic residues. Phosphoserine is present on residues serine 199 and serine 224. The segment covering tyrosine 222–tyrosine 239 has biased composition (polar residues). The span at arginine 240 to aspartate 263 shows a compositional bias: basic and acidic residues. Lysine 260 carries the N6-acetyllysine modification. The segment covering glycine 300–glutamate 310 has biased composition (acidic residues). A compositionally biased stretch (basic and acidic residues) spans glutamate 311–arginine 320. Residues lysine 482, lysine 483, and lysine 504 each participate in a glycyl lysine isopeptide (Lys-Gly) (interchain with G-Cter in SUMO2) cross-link. Positions leucine 542–proline 705 constitute a Helicase ATP-binding domain. Glycine 555–threonine 562 contacts ATP. The DEAH box signature appears at aspartate 652–histidine 655. One can recognise a Helicase C-terminal domain in the interval alanine 727–glycine 902. The segment at glycine 1155–leucine 1227 is disordered. 2 stretches are compositionally biased toward basic and acidic residues: residues serine 1157–alanine 1169 and glutamate 1181–serine 1194. Residue lysine 1166 forms a Glycyl lysine isopeptide (Lys-Gly) (interchain with G-Cter in SUMO2) linkage. Serine 1194 bears the Phosphoserine mark.

Belongs to the DEAD box helicase family. DEAH subfamily. PRP16 sub-subfamily. In terms of assembly, identified in the spliceosome C complex.

The protein localises to the nucleus. It carries out the reaction ATP + H2O = ADP + phosphate + H(+). Probable ATP-binding RNA helicase. Involved in pre-mRNA splicing as component of the spliceosome. This Homo sapiens (Human) protein is Pre-mRNA-splicing factor ATP-dependent RNA helicase PRP16 (DHX38).